Here is a 371-residue protein sequence, read N- to C-terminus: Monomethylxanthine methyltransferase 2 (371 aa).

S-adenosyl-L-homocysteine is bound by residues tyrosine 18, cysteine 61, asparagine 66, aspartate 100, leucine 101, serine 139, phenylalanine 140, and cysteine 156. Positions 157, 160, and 161 each coordinate theobromine. 4 residues coordinate Mg(2+): asparagine 178, aspartate 260, phenylalanine 262, and asparagine 263. Residue tyrosine 355 coordinates theobromine.

It belongs to the methyltransferase superfamily. Type-7 methyltransferase family. Mg(2+) is required as a cofactor.

It carries out the reaction 7-methylxanthine + S-adenosyl-L-methionine = theobromine + S-adenosyl-L-homocysteine + H(+). It participates in alkaloid biosynthesis. In terms of biological role, involved in the biosynthesis of caffeine. Catalyzes the conversion of 7-methylxanthine (7mX) to theobromine and with a lower activity of paraxanthine to caffeine. The chain is Monomethylxanthine methyltransferase 2 from Coffea canephora (Robusta coffee).